The primary structure comprises 66 residues: Conotoxin Ca5.2 (66 aa).

Positions 1 to 22 (MRCVPVFLILLGLIASAPSVDA) are cleaved as a signal peptide. A propeptide spanning residues 23 to 48 (RPQTKDDALASFHDSAKRHLQRLVNA) is cleaved from the precursor. Phenylalanine 62 is subject to Phenylalanine amide.

It belongs to the conotoxin T superfamily. Contains 2 disulfide bonds that can be either 'C1-C3, C2-C4' or 'C1-C4, C2-C3', since these disulfide connectivities have been observed for conotoxins with cysteine framework V (for examples, see AC P0DQQ7 and AC P81755). As to expression, expressed by the venom duct.

Its subcellular location is the secreted. The chain is Conotoxin Ca5.2 from Conus caracteristicus (Characteristic cone).